We begin with the raw amino-acid sequence, 201 residues long: Ras-related protein Rab-10 (201 aa).

16–23 (GDSGVGKT) contacts GTP. Residues 38-46 (FISTIGIDF) carry the Effector region motif. GTP is bound by residues 64–68 (DTAGQ), 122–125 (NKCD), and 152–154 (SAK). Positions 175–201 (PDSTDEQSRDTVNPVQPQRQSSSGGCC) are disordered. Residues 184–201 (DTVNPVQPQRQSSSGGCC) show a composition bias toward polar residues. 2 S-geranylgeranyl cysteine lipidation sites follow: C200 and C201.

The protein belongs to the small GTPase superfamily. Rab family. Interacts (GTP-bound form) with ehbp-1 (via C-terminal coiled coil). Interacts (GTP-bound form) with cnt-1 (via C-terminal ankyrin repeat). Interacts (GTP-bound form) with rab-5 GAP, tbc-2 (via putative coiled coil domain). Interacts (GTP-bound form) with amph-1. In terms of tissue distribution, almost ubiquitously expressed. Expressed in intestine, hypodermis, seam cells, body-wall muscles, many neurons, oviduct sheath cell, spermatheca, coelomocytes and pharyngeal and nerve ring.

It is found in the early endosome membrane. Its subcellular location is the late endosome membrane. The protein resides in the golgi apparatus membrane. The protein localises to the endosome membrane. It catalyses the reaction GTP + H2O = GDP + phosphate + H(+). Its activity is regulated as follows. Rab activation is generally mediated by a guanine exchange factor (GEF), while inactivation through hydrolysis of bound GTP is catalyzed by a GTPase activating protein (GAP). Tbc-4 is a likely GAP of this rab. Denn-4 is a putative GEF of this rab. Functionally, the small GTPases Rab are key regulators of intracellular membrane trafficking, from the formation of transport vesicles to their fusion with membranes. Rabs cycle between an inactive GDP-bound form and an active GTP-bound form that is able to recruit to membranes different set of downstream effectors directly responsible for vesicle formation, movement, tethering and fusion. Required for basolateral endocytic recycling, the return of macromolecules and fluid from endosomes to the plasma membrane, in polarized epithelial cells of the intestine upstream of rme-1. Involved in the formation of the endosomal tubular network that is required for basolateral recycling of clathrin-independent endocytic cargo such as daf-4 in the intestine. Required for the recruitment of cnt-1 effector to endosomal membranes in the intestinal epithelium, which is important for the regulation of levels of endosomal phosphatidylinositol-4,5-bisphosphate, a key phosphoinositide in membrane traffic, and for the recruitment of endosomal membrane-bending proteins, rme-1 and sdpn-1. Recruits the rab-5 GTPase-activating protein tbc-2 to endosomes where it then inactivates rab-5 resulting in removal of rab-5 from membranes, which is necessary for cargo transport from early endosomes to recycling endosomes in the basolateral intestine. Regulates recycling of synaptic membrane AMPA glutamate receptor, glr-1, from intracellular endosomal compartments back to synapses in a cholesterol-dependent endocytosis pathway functioning after clathrin-independent endocytosis in command interneurons. Regulates neuropeptide release from dense core vesicles (DCVs) of cholinergic motoneurons in cooperation with rab-5. They reciprocally recruit each other's inactivating GAP molecule leading to local exclusion of one or the other rab protein at the Golgi-endosomal interphase at an essential stage during DCV sorting. Regulates membrane trafficking of membranes and dendrite proteins from the Golgi and/or endosomal compartments to plasma membrane during dendrite morphogenesis together with the exocyst complex in the multi-dendritic PVD sensory neurons acting in a cell-autonomous manner and requiring its GTPase activity. Functions cell-autonomously together with the exocyst complex to regulate dendrite morphogenesis and anterior-posterior patterning of the PVD neurons dendritic arbor by balancing the anterograde and retrograde transport via molecular motors unc-116 (kinesin heavy chain) and dhc-1 (dynein heavy chain) to appropriately transport branching factors, such as dma-1, to the specific subcellular regions of the developing dendrite in its GTPase activity-dependent manner. This chain is Ras-related protein Rab-10, found in Caenorhabditis elegans.